Reading from the N-terminus, the 645-residue chain is Acetyl-coenzyme A synthetase 2 (645 aa).

CoA is bound by residues 190 to 193 (RGGK), Thr-308, and Asn-332. ATP-binding positions include 384–386 (GEP), 408–413 (DTWWQT), Asp-497, and Arg-512. Ser-520 contributes to the CoA binding site. Residue Arg-523 coordinates ATP. 3 residues coordinate Mg(2+): Val-534, His-536, and Val-539. Position 606 is an N6-acetyllysine (Lys-606).

Belongs to the ATP-dependent AMP-binding enzyme family. It depends on Mg(2+) as a cofactor. Acetylated. Deacetylation by the SIR2-homolog deacetylase activates the enzyme.

The enzyme catalyses acetate + ATP + CoA = acetyl-CoA + AMP + diphosphate. Catalyzes the conversion of acetate into acetyl-CoA (AcCoA), an essential intermediate at the junction of anabolic and catabolic pathways. AcsA undergoes a two-step reaction. In the first half reaction, AcsA combines acetate with ATP to form acetyl-adenylate (AcAMP) intermediate. In the second half reaction, it can then transfer the acetyl group from AcAMP to the sulfhydryl group of CoA, forming the product AcCoA. In Pseudomonas aeruginosa (strain ATCC 15692 / DSM 22644 / CIP 104116 / JCM 14847 / LMG 12228 / 1C / PRS 101 / PAO1), this protein is Acetyl-coenzyme A synthetase 2.